The chain runs to 260 residues: Adenosylcobinamide-GDP ribazoletransferase (260 aa).

Transmembrane regions (helical) follow at residues 42–62, 64–84, 117–137, 144–164, 192–212, 214–234, and 240–260; these read PLAG…ANAI, LPPL…TGAL, FAAL…MAII, YALL…LAFW, GLGL…VALI, ALVL…AKIG, and TLGA…VMAL.

The protein belongs to the CobS family. Requires Mg(2+) as cofactor.

It localises to the cell inner membrane. It carries out the reaction alpha-ribazole + adenosylcob(III)inamide-GDP = adenosylcob(III)alamin + GMP + H(+). The catalysed reaction is alpha-ribazole 5'-phosphate + adenosylcob(III)inamide-GDP = adenosylcob(III)alamin 5'-phosphate + GMP + H(+). It participates in cofactor biosynthesis; adenosylcobalamin biosynthesis; adenosylcobalamin from cob(II)yrinate a,c-diamide: step 7/7. In terms of biological role, joins adenosylcobinamide-GDP and alpha-ribazole to generate adenosylcobalamin (Ado-cobalamin). Also synthesizes adenosylcobalamin 5'-phosphate from adenosylcobinamide-GDP and alpha-ribazole 5'-phosphate. In Brucella ovis (strain ATCC 25840 / 63/290 / NCTC 10512), this protein is Adenosylcobinamide-GDP ribazoletransferase.